The chain runs to 202 residues: ATP-dependent Clp protease proteolytic subunit (202 aa).

Catalysis depends on Ser-101, which acts as the Nucleophile. The active site involves His-126.

It belongs to the peptidase S14 family. In terms of assembly, component of the chloroplastic Clp protease core complex.

Its subcellular location is the plastid. The protein resides in the chloroplast stroma. The enzyme catalyses Hydrolysis of proteins to small peptides in the presence of ATP and magnesium. alpha-casein is the usual test substrate. In the absence of ATP, only oligopeptides shorter than five residues are hydrolyzed (such as succinyl-Leu-Tyr-|-NHMec, and Leu-Tyr-Leu-|-Tyr-Trp, in which cleavage of the -Tyr-|-Leu- and -Tyr-|-Trp bonds also occurs).. Cleaves peptides in various proteins in a process that requires ATP hydrolysis. Has a chymotrypsin-like activity. Plays a major role in the degradation of misfolded proteins. The sequence is that of ATP-dependent Clp protease proteolytic subunit from Calycanthus floridus var. glaucus (Eastern sweetshrub).